Here is a 72-residue protein sequence, read N- to C-terminus: UPF0270 protein YheU (72 aa).

Belongs to the UPF0270 family.

In Salmonella dublin (strain CT_02021853), this protein is UPF0270 protein YheU.